The sequence spans 93 residues: Small ribosomal subunit protein uS19 (93 aa).

Disordered stretches follow at residues 1–24 and 73–93; these read MPRSLKKGPFVDDHLQKKVDAQNE and EFAPTRTFKGHEKDDRKGRRR. Composition is skewed to basic and acidic residues over residues 9–21 and 81–93; these read PFVDDHLQKKVDA and KGHEKDDRKGRRR.

Belongs to the universal ribosomal protein uS19 family.

Its function is as follows. Protein S19 forms a complex with S13 that binds strongly to the 16S ribosomal RNA. In Kineococcus radiotolerans (strain ATCC BAA-149 / DSM 14245 / SRS30216), this protein is Small ribosomal subunit protein uS19.